The following is a 461-amino-acid chain: Growth/differentiation factor 7 (461 aa).

Residues 1–19 (MDLSAAAALCLWLLSACRP) form the signal peptide. The propeptide occupies 20 to 315 (RDGLEAAAVL…ANLGGRRRRR (296 aa)). The N-linked (GlcNAc...) asparagine glycan is linked to asparagine 79. The segment at 287–360 (LRAAAEPPPD…GHGRRGRSRC (74 aa)) is disordered. The span at 323–350 (GAQGSGGGGGGGGGGGGGGGGGGGGAGR) shows a compositional bias: gly residues. Basic residues predominate over residues 351–360 (GHGRRGRSRC). Disulfide bonds link cysteine 360-cysteine 426, cysteine 389-cysteine 458, and cysteine 393-cysteine 460.

This sequence belongs to the TGF-beta family. In terms of assembly, homodimer; disulfide-linked.

Its subcellular location is the secreted. This chain is Growth/differentiation factor 7 (Gdf7), found in Mus musculus (Mouse).